The following is a 375-amino-acid chain: Eukaryotic translation initiation factor 3 subunit F (375 aa).

The 137-residue stretch at 30 to 166 (VVIQPQALFS…TRAYISAPVG (137 aa)) folds into the MPN domain. The tract at residues 307-375 (LGGESGSGES…EAQNGKEEKK (69 aa)) is disordered. Positions 323–332 (QRGGKGGRGG) are enriched in gly residues. 2 stretches are compositionally biased toward basic and acidic residues: residues 336 to 345 (TQERSGEEAR) and 358 to 375 (RSYEERTNEAQNGKEEKK).

Belongs to the eIF-3 subunit F family. In terms of assembly, component of the eukaryotic translation initiation factor 3 (eIF-3) complex.

It is found in the cytoplasm. Functionally, component of the eukaryotic translation initiation factor 3 (eIF-3) complex, which is involved in protein synthesis of a specialized repertoire of mRNAs and, together with other initiation factors, stimulates binding of mRNA and methionyl-tRNAi to the 40S ribosome. The eIF-3 complex specifically targets and initiates translation of a subset of mRNAs involved in cell proliferation. The protein is Eukaryotic translation initiation factor 3 subunit F of Aspergillus niger (strain ATCC MYA-4892 / CBS 513.88 / FGSC A1513).